A 755-amino-acid polypeptide reads, in one-letter code: Tryptophan 2-monooxygenase (755 aa).

Positions 247, 267, 275, and 295 each coordinate FMN. Position 295 (Arg295) interacts with substrate.

It belongs to the tryptophan 2-monooxygenase family. FMN is required as a cofactor.

It carries out the reaction L-tryptophan + O2 = indole-3-acetamide + CO2 + H2O. Its pathway is plant hormone metabolism; auxin biosynthesis. This chain is Tryptophan 2-monooxygenase (tms1), found in Rhizobium radiobacter (Agrobacterium tumefaciens).